We begin with the raw amino-acid sequence, 321 residues long: Glucokinase (321 aa).

Residue 8–13 coordinates ATP; it reads GDVGGT.

The protein belongs to the bacterial glucokinase family.

The protein localises to the cytoplasm. The enzyme catalyses D-glucose + ATP = D-glucose 6-phosphate + ADP + H(+). The protein is Glucokinase of Citrobacter koseri (strain ATCC BAA-895 / CDC 4225-83 / SGSC4696).